A 350-amino-acid chain; its full sequence is S-adenosylmethionine:tRNA ribosyltransferase-isomerase (350 aa).

This sequence belongs to the QueA family. As to quaternary structure, monomer.

It localises to the cytoplasm. The catalysed reaction is 7-aminomethyl-7-carbaguanosine(34) in tRNA + S-adenosyl-L-methionine = epoxyqueuosine(34) in tRNA + adenine + L-methionine + 2 H(+). Its pathway is tRNA modification; tRNA-queuosine biosynthesis. In terms of biological role, transfers and isomerizes the ribose moiety from AdoMet to the 7-aminomethyl group of 7-deazaguanine (preQ1-tRNA) to give epoxyqueuosine (oQ-tRNA). The sequence is that of S-adenosylmethionine:tRNA ribosyltransferase-isomerase from Bacillus cereus (strain Q1).